Consider the following 165-residue polypeptide: Nucleotide-binding protein P9211_04811 (165 aa).

Belongs to the YajQ family.

Nucleotide-binding protein. In Prochlorococcus marinus (strain MIT 9211), this protein is Nucleotide-binding protein P9211_04811.